The following is a 443-amino-acid chain: MSTTESIASSQTSLSSWRKSDTTWTLGLFGTAIGAGVLFFPIRAGFGGLIPILVMLVLAYPIAFYCHRALARLCLSGANPSGNITETVEEHFGKTGGVVITFLYFFAICPLLWIYGVTITNTFMTFWENQLQMPALNRGVVALLLLLLMAFVIWFGKDLMVKVMSYLVWPFIASLVVISLSLIPYWNSAVIDQVNLSDIALTGHDGILVTVWLGISIMVFSFNFSPIVSSFVVSKREEYEAQFGREYTERKCSQIISRASMLMVAVVMFFAFSCLFTLSPQNMADAKAQNIPVLSYLANHFASMSGTKSTFATLLEYGASIIALVAIFKSFFGHYLGTLEGLNGLILRFGYKGDKTRVSSGKLNTLSMVFIMGSTWVVAYANPNILDLIEAMGAPIIASLLCLLPMYAIRKAPSLAKYRGRLDNLFVTAIGLLTILNIVYKLF.

A run of 11 helical transmembrane segments spans residues 22 to 42, 44 to 64, 97 to 117, 140 to 160, 163 to 183, 207 to 227, 259 to 279, 319 to 339, 366 to 386, 389 to 409, and 423 to 443; these read TTWT…FFPI, AGFG…PIAF, GVVI…IYGV, VVAL…KDLM, VMSY…LSLI, ILVT…FSPI, ASML…FTLS, ASII…LGTL, LSMV…PNIL, IEAM…MYAI, and DNLF…YKLF.

This sequence belongs to the amino acid/polyamine transporter 2 family. SdaC/TdcC subfamily.

The protein localises to the cell inner membrane. It carries out the reaction L-threonine(in) + H(+)(in) = L-threonine(out) + H(+)(out). The enzyme catalyses L-serine(in) + H(+)(in) = L-serine(out) + H(+)(out). Its function is as follows. Involved in the import of threonine and serine into the cell, with the concomitant import of a proton (symport system). This Klebsiella pneumoniae (strain 342) protein is Threonine/serine transporter TdcC.